The sequence spans 180 residues: NAD(P)H-quinone oxidoreductase subunit I, chloroplastic (180 aa).

2 consecutive 4Fe-4S ferredoxin-type domains span residues 55–84 (GRIH…VDWK) and 95–124 (LNYS…MTEE). Residues Cys64, Cys67, Cys70, Cys74, Cys104, Cys107, Cys110, and Cys114 each coordinate [4Fe-4S] cluster.

The protein belongs to the complex I 23 kDa subunit family. NDH is composed of at least 16 different subunits, 5 of which are encoded in the nucleus. [4Fe-4S] cluster serves as cofactor.

The protein localises to the plastid. The protein resides in the chloroplast thylakoid membrane. It catalyses the reaction a plastoquinone + NADH + (n+1) H(+)(in) = a plastoquinol + NAD(+) + n H(+)(out). The enzyme catalyses a plastoquinone + NADPH + (n+1) H(+)(in) = a plastoquinol + NADP(+) + n H(+)(out). Functionally, NDH shuttles electrons from NAD(P)H:plastoquinone, via FMN and iron-sulfur (Fe-S) centers, to quinones in the photosynthetic chain and possibly in a chloroplast respiratory chain. The immediate electron acceptor for the enzyme in this species is believed to be plastoquinone. Couples the redox reaction to proton translocation, and thus conserves the redox energy in a proton gradient. This is NAD(P)H-quinone oxidoreductase subunit I, chloroplastic from Nandina domestica (Heavenly bamboo).